The sequence spans 440 residues: Beta-1,3-galactosyl-O-glycosyl-glycoprotein beta-1,6-N-acetylglucosaminyltransferase (440 aa).

Over 1–9 the chain is Cytoplasmic; it reads MKMAGWKKK. A helical; Signal-anchor for type II membrane protein membrane pass occupies residues 10–30; the sequence is LCPGHHLWALGCYMLLAVVSL. Over 31–440 the chain is Lumenal; it reads RLSLRFKCDV…RHKAIYGTEL (410 aa). 2 N-linked (GlcNAc...) asparagine; by host glycosylation sites follow: N72 and N108. 4 disulfide bridges follow: C73–C230, C164–C384, C185–C212, and C393–C425.

The protein belongs to the glycosyltransferase 14 family.

It is found in the host Golgi apparatus membrane. The catalysed reaction is a 3-O-[beta-D-galactosyl-(1-&gt;3)-N-acetyl-alpha-D-galactosaminyl]-L-seryl-[protein] + UDP-N-acetyl-alpha-D-glucosamine = 3-O-{beta-D-galactosyl-(1-&gt;3)-[N-acetyl-beta-D-glucosaminyl-(1-&gt;6)]-N-acetyl-alpha-D-galactosaminyl}-L-seryl-[protein] + UDP + H(+). It carries out the reaction a 3-O-[beta-D-galactosyl-(1-&gt;3)-N-acetyl-alpha-D-galactosaminyl]-L-threonyl-[protein] + UDP-N-acetyl-alpha-D-glucosamine = a 3-O-{beta-D-galactosyl-(1-&gt;3)-[N-acetyl-beta-D-glucosaminyl-(1-&gt;6)]-N-acetyl-alpha-D-galactosaminyl}-L-threonyl-[protein] + UDP + H(+). The enzyme catalyses a beta-D-Gal-(1-&gt;4)-beta-D-GlcNAc-(1-&gt;3)-beta-D-Gal-(1-&gt;4)-beta-D-GlcNAc derivative + UDP-N-acetyl-alpha-D-glucosamine = a beta-D-Gal-(1-&gt;4)-beta-D-GlcNAc-(1-&gt;3)-[beta-D-GlcNAc-(1-&gt;6)]-beta-D-Gal-(1-&gt;4)-N-acetyl-beta-D-glucosaminyl derivative + UDP + H(+). It catalyses the reaction 3-O-[N-acetyl-beta-D-glucosaminyl-(1-&gt;3)-N-acetyl-alpha-D-galactosaminyl]-L-seryl-[protein] + UDP-N-acetyl-alpha-D-glucosamine = 3-O-[N-acetyl-beta-D-glucosaminyl-(1-&gt;3)-[N-acetyl-beta-D-glucosaminyl-(1-&gt;6)]-N-acetyl-alpha-D-galactosaminyl]-L-seryl-[protein] + UDP + H(+). The catalysed reaction is a 3-O-[N-acetyl-beta-D-glucosaminyl-(1-&gt;3)-N-acetyl-alpha-D-galactosaminyl]-L-threonyl-[protein] + UDP-N-acetyl-alpha-D-glucosamine = 3-O-[N-acetyl-beta-D-glucosaminyl-(1-&gt;3)-[N-acetyl-beta-D-glucosaminyl-(1-&gt;6)]-N-acetyl-alpha-D-galactosaminyl]-L-threonyl-[protein] + UDP + H(+). The protein operates within protein modification; protein glycosylation. In terms of biological role, non-essential glycosyltransferase that can synthesize all known mucin beta 6 N-acetylglucosaminides. Mediates core 2 and core 4 O-glycan branching, 2 important steps in mucin-type biosynthesis. Has also I-branching enzyme activity by converting linear into branched poly-N-acetyllactosaminoglycans. Contributes to the post-translational modifications of structural proteins. The protein is Beta-1,3-galactosyl-O-glycosyl-glycoprotein beta-1,6-N-acetylglucosaminyltransferase (Bo17) of Bovine herpesvirus 4 (strain LVR140) (BoHV-4).